A 449-amino-acid chain; its full sequence is Anther-specific proline-rich protein APG (449 aa).

Pro residues predominate over residues 1-118 (PPKPQPKPPP…KPPAPSPPKP (118 aa)). Residues 1–123 (PPKPQPKPPP…SPPKPQNKTI (123 aa)) are disordered. The active-site Nucleophile is the Ser132. Catalysis depends on residues Asp425 and His428.

This sequence belongs to the 'GDSL' lipolytic enzyme family. As to expression, found in anther, only in male fertile plants.

This chain is Anther-specific proline-rich protein APG (APG), found in Brassica napus (Rape).